An 869-amino-acid chain; its full sequence is TATA box-binding protein-associated factor RNA polymerase I subunit C (869 aa).

Disordered stretches follow at residues 605 to 629 (SSLR…ASWT) and 729 to 869 (GAAW…RMGF). At T834 the chain carries Phosphothreonine. Residues 835 to 860 (PPHSQASSVRATRSQQHTPVLSSSQP) are compositionally biased toward polar residues. Residue S848 is modified to Phosphoserine.

As to quaternary structure, component of the transcription factor SL1/TIF-IB complex, composed of TBP and at least TAF1A, TAF1B, TAF1C and TAF1D. In the complex interacts directly with TBP, TAF1A and TAF1B. Interaction of the SL1/TIF-IB subunits with TBP excludes interaction of TBP with the transcription factor IID (TFIID) subunits. Interacts with MYC and RRN3. Interacts with p53/TP53; the interaction prevents the association of SL1/TIF-IB with UBTF and represses RNA polymerase I transcription. Part of Pol I pre-initiation complex (PIC), in which Pol I core assembles with RRN3 and promoter-bound UTBF and SL1/TIF-IB complex.

It is found in the nucleus. The protein resides in the nucleolus. Component of the transcription factor SL1/TIF-IB complex, which is involved in the assembly of the PIC (pre-initiation complex) during RNA polymerase I-dependent transcription. The rate of PIC formation probably is primarily dependent on the rate of association of SL1/TIF-IB with the rDNA promoter. SL1/TIF-IB is involved in stabilization of nucleolar transcription factor 1/UBTF on rDNA. Formation of SL1/TIF-IB excludes the association of TBP with TFIID subunits. Recruits RNA polymerase I to the rRNA gene promoter via interaction with RRN3. The polypeptide is TATA box-binding protein-associated factor RNA polymerase I subunit C (TAF1C) (Homo sapiens (Human)).